The sequence spans 494 residues: Probable cytosol aminopeptidase (494 aa).

Residues lysine 260 and aspartate 265 each contribute to the Mn(2+) site. Lysine 272 is an active-site residue. Residues aspartate 283, aspartate 342, and glutamate 344 each contribute to the Mn(2+) site. Residue arginine 346 is part of the active site.

The protein belongs to the peptidase M17 family. Mn(2+) is required as a cofactor.

The protein localises to the cytoplasm. It carries out the reaction Release of an N-terminal amino acid, Xaa-|-Yaa-, in which Xaa is preferably Leu, but may be other amino acids including Pro although not Arg or Lys, and Yaa may be Pro. Amino acid amides and methyl esters are also readily hydrolyzed, but rates on arylamides are exceedingly low.. The enzyme catalyses Release of an N-terminal amino acid, preferentially leucine, but not glutamic or aspartic acids.. Presumably involved in the processing and regular turnover of intracellular proteins. Catalyzes the removal of unsubstituted N-terminal amino acids from various peptides. The polypeptide is Probable cytosol aminopeptidase (Bacillus cereus (strain ZK / E33L)).